A 373-amino-acid chain; its full sequence is Aromatic amino acid aminotransferase (373 aa).

Lys212 carries the post-translational modification N6-(pyridoxal phosphate)lysine.

It belongs to the class-II pyridoxal-phosphate-dependent aminotransferase family. In terms of assembly, homodimer. Pyridoxal 5'-phosphate serves as cofactor.

The enzyme catalyses an aromatic L-alpha-amino acid + 2-oxoglutarate = an aromatic oxo-acid + L-glutamate. Its function is as follows. Aminotransferase that catalyzes the conversion of aromatic amino acids and 2-oxoglutarate into corresponding aromatic oxo acids and L-glutamate. The protein is Aromatic amino acid aminotransferase of Corynebacterium jeikeium (strain K411).